A 4912-amino-acid chain; its full sequence is MFNRQASGGAGSSGQGAGSSQTASAAPVSAGVGVGGGGGASGAAAGAGSAAGSGSGSGSGSAAPPSHSPDLYLRPLPFLDAKWLRADLIASLRNAADGAVLWNHLIQDCELVSSPTAPLLNARGQLSYLGDDGKHYCGAQQLKCSCCQPEYCGPLSACNCDGCRPLDSDTAIKKLTTQAAAQQAAHLSQATDMVLSGWLWSQPPSQQARLDCQRSMISELQELALRAAGNCLSAQHLRQQLFIYERYFVALKRERERERKSTTSAQAVASVTTANTTIAATTANAAVESQPAEQQAEHGALGLARVATHAALNFSFAFLRRAWRSGEDTEMCSELLSEALASLQELPEATLFEAAVVSSLWLEVMERSIKFLRLVALGDPMGNRCTAPLNDRHTALCLLLELGVQKGTLAATLECVVLLLLLWEKDRAGNDNRDMPRKTGAPLQRILLRYQKIGATAKGGGIAGGEPAPVASATETFLRFLSLPKSSAAIVDLRRAAVVIISHLDRMVQPLMPRCLLRGGQATAASSSSAPQQRIYALGWPSLSKDQQGFSAEPTLSWSGESAGVPTLSCRFQIKQVACCETQMLILSQEGKLYTWRLAKPEAEPLPMEEVAHDVFISIAGHCEGRHFLAIDSNHNAYSWGTGEDHRLGHGDTHARAVPTKIAALEQHCVQSVYCGCSYSAAITCGGNLLTWGRGTYARLGHGNSDDRSLPTLVVALSDHMVVDVALGSGDAHSLALTSEGLVFAWGDGDYGKLGNGNCNGSLQPILVESLPRVQRVFAGSQFSVALSSEGQLYTWGKATCLGHQLVERSVQGCSVPRLVSSLQHKRIVDVAVSVAHCLALSSSGEVFGWGRNDSQQICPASVSSEPLLRTPILVSLPTFPASGIACTSAQSLVWTQSSHQGVPRRAPFVVDLGEPTFRLLDQLLGMCSSQDNRQTPNQESECIAVACLNLFRLQLLALIANGVEPRQVGLASGSRLLCSLKTRILGLAGGSQVLRTIQVAAQQALQDGWSVLLPTAAERAQTLTSLLPSEPGQASSAGHRFMTDLLVSSLMAEGGLESALQHAIRLESSSCSADCGDGVHLPLLQLITRLLSNNAALSQTRLSPTLGKQQEKEEEEREQQHQEPSTSPSLSLLHRFQRLLLSHIHQAQPEEETTGAEALLLQYMHALIPACVATLQKAHELALQCREPGENSFGQMVGHLGRVLQADISDALLNELLVGLLLLKRDRPQCLGGLRWARLFLPLLRVLDRLNRALGEGELRDGDDMGWPGIICRGGPKGGPPPADPETHYVRRADMENLLLDGSRCIILAGYVCDLSGYNCESETLRSVLDSGLGKDLTAEMSSQVHRTAMEHILEHHKLGKYMVQASTEEKSSAPGPSRLTHFSSECALAQLLGLVANLMCSGPALQPAELQCRQLDKSSLLSGGLQLLQPSNPFDEEKGEARSSHSCHSTAGNTPTELPPPLPMQQQLAPGRGKSQLQLRADAFISGLAEARVSEPPVAAWLALTERYCKAHNLMWHQEFATEHPVQELERLLSAVLIRHQYLGGLVLNALETEVPPPRQLGEIIRLVHQAKWSVVRTRQQLNRSYKEVCAPILERLRFLLYEVRPAISPQQRGLRRLPILQRPPRFKMLVRRLLQELRSSRQPAKPEDLLNASIQQEQEKKPQSMPKQELEEQEEEETLLRRLNERQIHGEGELDPALMQDIVDFALQDSCDVETARRAMYCQMQRYQLRLAGLQIVQQLLELHGLLDAAQYSLLNGFLGLHLKSTSSGGGSTGSGSSLHVLGQLNMISAYQKARLLLAQSRVLDWAVRELRRLVNQEQQGHARGKDSTNLGTYVLLKRLPRARFLLSVFGLLAKELGPNELGFLINSGLLGTVLGLLAQTGGEGATGGQVHGELSILYEDSVLKQKSSKAQLSGPDLAKLMKIGTRIVRGADWKWGDQDGNPPGEGRIISEVGEDGWVRVEWYTGATNSYRMGKEGQYDLQLADSALNVASPTEPEREDVSGSEASPTSDSHPSKLLRHCAAKLLQILAVGTGLHGAQLDKDALRGMTSMFRTIIYPKPSMSNISYALGWLNLGFIRAISGDCPRLCLELSTPGWLSHYLSLLEQPAGNEAGVYRQLHCLRLLQLILAQWGAEEEPRMPALVHQLFATLGRIALHCPGDASLLPTAEGKARVLLTASHSGSVAEELVALLRRLHTLPSWNPVINSFLAQKLCVAAELLAEQSHSTALDSEQVFVLGVLGAMGGHDLRPRVGLHCFHEGSHMVIASFTPKGRCLLAPGGVGSGVGFVKVQLPAVMPHLDHTVFSLSRLPMNEMLLNAWTVLLYGPAPELRELPSSADGRLDLALLRAQQLQMAVLHTNGVLYRHQVALRRILKQRAPGSIYASPDEPDRSDAESQQPGEQDQQLSSGSGQEPQLLIQCILLRATQASPVKACYSYMDLATAALNCIQSLATQAHQELSEGGGVPPNGRALSSPPQPTMVHGVPVYNVARKEQKPSEQVEQKSKWPAAATDAQLIGQIMEMGFTRRTVELALKQLSLQAEIMPTPEQIVQWILEHPDVCANTIEEDTLPLASSASSHDPEADSDNECPSSNSTTSSSTSSDTVEGQPMAVSGPAPPVKFESRKDFQTADLYALYVRGLVRPGMTVRCCRDFEEIKQGDMGTVLIVDTEGLHDLNVQVDWRNHGSTYWVCFVHIELVEAAQTHHQPRPPPIAVGARVRLRTSSLRYGMLCPLRLGRSQGSSAIGVVSSVRSKQLTVDFPDQPAWQGHINEVELVASQPTSATLPSLGDSCSQMPPSDLIEDWSRCIRSLTVSSNEAAAKHLLNGSNQPWQSCSSGPCRHWIRLELHDRILVHSLTLKVSPEDHSHMPSLLEIRVGDCVDSLKEYTWIPVPAGASRVLLMQQVPTYYPWVEVVVKQCQNNGIQCKIHGIKFVGRRQQPDLQHILANAQFLASEYSAGVGPGSTAGAGAVSTSHEEAAAAPEQDLPCTVMVWGLNDKEQLGGLKGSKVKVPTFSQTISRLRPIHIAGGSKSLFIVSQDGKVYACGEGTNGRLGLGVTHNVPLPHQLPVLRQYVVKKVAVHSGGKHALALTLDGKVFSWGEGEDGKLGHGNRTTLDKPRLVEALRAKKIRDVACGSSHSAAISSQGELYTWGLGEYGRLGHGDNTTQLKPKLVTALAGRRVVQVACGSRDAQTLALTEDGAVFSWGDGDFGKLGRGGSEGSDTPHEIERLSGIGVVQIECGAQFSLALTRAGEVWTWGKGDYYRLGHGGDQHVRKPQPIGGLRGRRVIHVAVGALHCLAVTDAGQVYAWGDNDHGQQGSGNTFVNKKPALVIGLDAVFVNRVACGSSHSIAWGLPNASSDEEKRGPVPFSSTRDPLGGSSLGIYEAETMQTLKQEAKPLNQSSLSESLALETPAARQAALGHVLRAMSILQARQLIVAALTSHSKVNFKERGAVGGEEDHLIGGPIMGAPLQLAETIAQGGGEAPADATDAGLQEHSPEAAVDALTGGMSGGANTLPPLSAGPLSAFQSLTGSLSMSGSLSSSALPQHKHSRMSASAMSVMAATMTQQEEMLSHISHCHGLDDFGGLLGEPEAKSLVELLKLAVCGRCGPPSTSQTIADTLISLGAGTPAVAAMLLETCITELEDLCTSRHCLGKLPKPVMQESSHPYVDNVNVTGVVRIPGAEMLRLEFDSQCSTEKRNDPLVIMDGTGRVLAMRSGREFAHWAPEIRVLGDELRWKFSSDSSVNGWGWRFWVHAIMPAATLGESGSDRAVLSQPSMALVMSLLDSRLAPRQPSVLLRLASALAACSQLGALTTAQRIWSLRKLHAVLLLEQAPRPQDPSLSTLLQPLIPELLRQYEYEEPQVRGGIHLMHSDYFKTLAALACDMQLDAALPATSSSSSSSAAPGAISSTGDVHKWAWFKRYCIAVRVAQSLIRRTELPRAFCLEVRKKFAEMLPSSSSNSNANPGCQSPGASMLNSTTSLSSSTVSNVSPPPGITGEQPDLHCHAHQLESTSTLLHEDHTLFQAPHDAQLLQWLNRRPDDWALSWGGASTIYGWGHNHRGQLGGLEGSRIKTPTPCEALSLLRPVQLAGGEQSLFAVTPDGKLFATGYGSGGRLGVGGSDSWAIPTLLGSLQHVFVKKVAVNSGGKHCLALTTEGEVYAWGEGEDGKLGHGNRMSYDRPKLVEHLNGMSVADIACGSAHSAAITASGHVLTWGKGRYGRLGHGDSEDQLRPKLVEALLGYRAIDIACGSGDAQTLCITDDDNVWSWGDGDYGKLGRGGSDGCKLPYKIESLAGLGVVKVECGSQFSVALTKSGAVYTWGKGDFHRLGHGSVDHVRRPKKVAALQGKKIISIATGSLHCVACSDSGEVYTWGDNDEGQLGDGTVTAIQRPRLVAALQGKHIVKVTCGSAHTLALSTSQLSERLRPLPNPPLEYDLVRDLAPEALHARLILLHHFSELVCPCLAMLPISGDLSLGALKDVLVYNIKEAAFRKVIQTTMVRDKQHGPVIELNRIQVKRSRNRCNGLAGIDGMKSVFGQMVQKLPLLTQEALALPHRVWKVKFVGESVDDCGGGYSESIAEMCDELQNGSVPLLINTPNGRGEAGANRDCFLLDPTLSSVLQMNMFRFLGVLMGIAVRTGSPLSINLAEPVWRQLTGEVLRPTDLTEVDRDYVAGLLCIRNMDDDPKLFTALELPFSTSSARGHEVPLSTRYTHISPRNRAEYVRLALGFRLHEFDEQVKAVRDGMSKVIPVPLLSLFSAAELQAMVCGSPDIPLGLLKSVATYKGFDPSSALVTWFWEVMEEFTNQERSLFLRFVWGRTRLPRTIADFRGRDFVLQVLEKNPPDHFLPESYTCFFLLKMPRYSCKAVLLEKLKYAIHFCKSIDTDEYARVAMGEPTEATGSEDNSDLESVASHEG.

The disordered stretch occupies residues 1 to 67 (MFNRQASGGA…GSGSAAPPSH (67 aa)). Residues 8 to 17 (GGAGSSGQGA) show a composition bias toward gly residues. Residues 18-31 (GSSQTASAAPVSAG) show a composition bias toward low complexity. Gly residues-rich tracts occupy residues 32–41 (VGVGGGGGAS) and 49–59 (SAAGSGSGSGS). 5 RCC1 repeats span residues 634–685 (NHNA…AITC), 686–739 (GGNL…ALTS), 741–789 (GLVF…ALSS), 791–843 (GQLY…ALSS), and 844–897 (SGEV…VWTQ). Disordered regions lie at residues 1102-1129 (RLSP…STSP), 1428-1475 (QLLQ…PGRG), and 1659-1681 (QEQE…EEET). The span at 1446–1458 (SHSCHSTAGNTPT) shows a compositional bias: polar residues. Phosphothreonine is present on threonine 1776. Residues 1917-1990 (SGPDLAKLMK…QYDLQLADSA (74 aa)) form the MIB/HERC2 domain. Disordered stretches follow at residues 1994–2018 (ASPT…SHPS) and 2381–2412 (GSIY…SGSG). Residues 2396 to 2412 (ESQQPGEQDQQLSSGSG) show a composition bias toward polar residues. The UBA domain occupies 2511-2557 (ATDAQLIGQIMEMGFTRRTVELALKQLSLQAEIMPTPEQIVQWILEH). The interval 2572-2620 (LASSASSHDPEADSDNECPSSNSTTSSSTSSDTVEGQPMAVSGPAPPVK) is disordered. A compositionally biased stretch (low complexity) spans 2591 to 2604 (SSNSTTSSSTSSDT). A CPH domain is found at 2624-2699 (RKDFQTADLY…VCFVHIELVE (76 aa)). The 179-residue stretch at 2780–2958 (TSATLPSLGD…FLASEYSAGV (179 aa)) folds into the DOC domain. 7 RCC1 repeats span residues 2985–3036 (PCTV…IVSQ), 3037–3090 (DGKV…ALTL), 3091–3142 (DGKV…AISS), 3144–3194 (GELY…TLAL), 3197–3248 (DGAV…ALTR), 3250–3300 (GEVW…AVTD), and 3302–3352 (GQVY…AWGL). Disordered regions lie at residues 3352–3374 (LPNA…RDPL) and 3953–4000 (LPSS…EQPD). Residues 3974 to 3988 (LNSTTSLSSSTVSNV) show a composition bias toward low complexity. RCC1 repeat units lie at residues 4049–4099 (STIY…AVTP), 4101–4153 (GKLF…ALTT), 4155–4205 (GEVY…AITA), 4207–4259 (GHVL…CITD), 4261–4311 (DNVW…ALTK), 4313–4363 (GAVY…ACSD), and 4365–4415 (GEVY…ALST). The HECT domain occupies 4547–4882 (ALALPHRVWK…IHFCKSIDTD (336 aa)). Cysteine 4850 functions as the Glycyl thioester intermediate in the catalytic mechanism. Residues 4891 to 4912 (EPTEATGSEDNSDLESVASHEG) form a disordered region.

Its subcellular location is the cytoplasm. It is found in the cytoskeleton. The protein resides in the microtubule organizing center. It localises to the centrosome. The protein localises to the centriole. It catalyses the reaction S-ubiquitinyl-[E2 ubiquitin-conjugating enzyme]-L-cysteine + [acceptor protein]-L-lysine = [E2 ubiquitin-conjugating enzyme]-L-cysteine + N(6)-ubiquitinyl-[acceptor protein]-L-lysine.. Its pathway is protein modification; protein ubiquitination. Functionally, probable E3 ubiquitin-protein ligase which accepts ubiquitin from an E2 ubiquitin-conjugating enzyme in the form of a thioester and then directly transfers the ubiquitin to targeted substrates. This Drosophila melanogaster (Fruit fly) protein is Probable E3 ubiquitin-protein ligase HERC2 (HERC2).